Consider the following 124-residue polypeptide: MPTIQQLVRKGRTPKVVKTKAPALKANPQQRGVCTRVYTTTPKKPNSALRKVARVKLSNGQEVTAYIPGEGHNLQEHSMVLVRGGRVKDLPGVRYKIVRGALDTQAVKNRKQARSRYGAKMEKK.

The tract at residues 1-20 is disordered; it reads MPTIQQLVRKGRTPKVVKTK. Positions 9 to 18 are enriched in basic residues; that stretch reads RKGRTPKVVK. At D89 the chain carries 3-methylthioaspartic acid.

This sequence belongs to the universal ribosomal protein uS12 family. Part of the 30S ribosomal subunit. Contacts proteins S8 and S17. May interact with IF1 in the 30S initiation complex.

Its function is as follows. With S4 and S5 plays an important role in translational accuracy. Interacts with and stabilizes bases of the 16S rRNA that are involved in tRNA selection in the A site and with the mRNA backbone. Located at the interface of the 30S and 50S subunits, it traverses the body of the 30S subunit contacting proteins on the other side and probably holding the rRNA structure together. The combined cluster of proteins S8, S12 and S17 appears to hold together the shoulder and platform of the 30S subunit. This Clavibacter michiganensis subsp. michiganensis (strain NCPPB 382) protein is Small ribosomal subunit protein uS12.